An 837-amino-acid polypeptide reads, in one-letter code: A disintegrin and metalloproteinase with thrombospondin motifs 4 (837 aa).

The first 51 residues, 1 to 51, serve as a signal peptide directing secretion; sequence MSQTGSHPGRGLAGRWLWGAQPCLLLPIVPLSWLVWLLLLLLASLLPSARL. The propeptide occupies 52–212; that stretch reads ASPLPREEEI…PSPRPRRAKR (161 aa). An N-linked (GlcNAc...) asparagine glycan is attached at N68. The segment at 166–191 is disordered; that stretch reads EGGTPNSAGGPGAHILRRKSPASGQG. Residues 192-199 carry the Cysteine switch motif; the sequence is PMCNVKAP. C194 lines the Zn(2+) pocket. The Peptidase M12B domain maps to 218–428; that stretch reads RFVETLVVAD…GYGHCLLDKP (211 aa). Cystine bridges form between C293–C345, C322–C327, C339–C423, C377–C407, C449–C472, C460–C482, C467–C501, C495–C506, C532–C569, C536–C574, and C547–C559. H361 lines the Zn(2+) pocket. The active site involves E362. Positions 365 and 371 each coordinate Zn(2+). Positions 437–519 constitute a Disintegrin domain; sequence TFPGKDYDAD…DQLQDFNIPQ (83 aa). One can recognise a TSP type-1 domain in the interval 520–575; the sequence is AGGWGPWGPWGDCSRTCGGGVQFSSRDCTRPVPRNGGKYCEGRRTRFRSCNTEDCP. Positions 686 to 837 are spacer; it reads SKQSGSFRKF…LRRRPWVGRK (152 aa).

In terms of assembly, interacts with SRPX2. Zn(2+) is required as a cofactor. In terms of processing, the precursor is cleaved by a furin endopeptidase. Glycosylated. Can be O-fucosylated by POFUT2 on a serine or a threonine residue found within the consensus sequence C1-X(2)-(S/T)-C2-G of the TSP type-1 repeat domains where C1 and C2 are the first and second cysteine residue of the repeat, respectively. Fucosylated repeats can then be further glycosylated by the addition of a beta-1,3-glucose residue by the glucosyltransferase, B3GALTL. Fucosylation mediates the efficient secretion of ADAMTS family members. Can also be C-glycosylated with one or two mannose molecules on tryptophan residues within the consensus sequence W-X-X-W of the TPRs, and N-glycosylated. These other glycosylations can also facilitate secretion.

The protein resides in the secreted. It localises to the extracellular space. The protein localises to the extracellular matrix. It catalyses the reaction Glutamyl endopeptidase. Bonds cleaved include 370-Thr-Glu-Gly-Glu-|-Ala-Arg-Gly-Ser-377 in the interglobular domain of mammalian aggrecan.. Cleaves aggrecan, a cartilage proteoglycan, at the '392-Glu-|-Ala-393' site and may be involved in its turnover. Also cleaves COMP. May play an important role in the destruction of aggrecan in arthritic diseases. The protein is A disintegrin and metalloproteinase with thrombospondin motifs 4 (ADAMTS4) of Pongo abelii (Sumatran orangutan).